Here is a 68-residue protein sequence, read N- to C-terminus: Alpha-conotoxin Lp1.4 (68 aa).

Positions 1-21 (MGMRMMSIMFMLVVLATTVVS) are cleaved as a signal peptide. The propeptide occupies 22 to 48 (FTSDRALDAMNAAASKKASRLIALAVR). 2 disulfides stabilise this stretch: C50-C56 and C51-C64. The segment at 52 to 54 (SHP) is ser-Xaa-Pro motif, crucial for potent interaction with nAChR. An Aspartic acid 1-amide modification is found at D65.

Belongs to the conotoxin A superfamily. As to expression, expressed by the venom duct.

The protein resides in the secreted. Alpha-conotoxins act on postsynaptic membranes, they bind to the nicotinic acetylcholine receptors (nAChR) and thus inhibit them. This toxin inhibits mouse muscle alpha-1-beta-1-gamma-delta (CHRNA1-CHRNB1-CHRNG-CHRND), and weakly rat neuronal alpha-6/alpha-3-beta-2 (CHRNA6/CHRNA3-CHRNB2). This Conus leopardus (Leopard cone) protein is Alpha-conotoxin Lp1.4.